Reading from the N-terminus, the 58-residue chain is MSPQTETKASVGFKAGVKDYKLTYYTPEYETKDTDILAAFRVTPQPGVPPEEAGQAVA.

Residues 1–2 (MS) constitute a propeptide that is removed on maturation. Position 3 is an N-acetylproline (Pro3). Lys14 is subject to N6,N6,N6-trimethyllysine.

This sequence belongs to the RuBisCO large chain family. Type I subfamily. In terms of assembly, heterohexadecamer of 8 large chains and 8 small chains.

It is found in the plastid. The protein localises to the chloroplast. It carries out the reaction 2 (2R)-3-phosphoglycerate + 2 H(+) = D-ribulose 1,5-bisphosphate + CO2 + H2O. It catalyses the reaction D-ribulose 1,5-bisphosphate + O2 = 2-phosphoglycolate + (2R)-3-phosphoglycerate + 2 H(+). In terms of biological role, ruBisCO catalyzes two reactions: the carboxylation of D-ribulose 1,5-bisphosphate, the primary event in carbon dioxide fixation, as well as the oxidative fragmentation of the pentose substrate in the photorespiration process. Both reactions occur simultaneously and in competition at the same active site. This Rosa damascena (Damask rose) protein is Ribulose bisphosphate carboxylase large chain (rbcL).